The following is a 198-amino-acid chain: MARCKS-related protein (198 aa).

The segment at 1-198 (MGSQSSKAPR…DPAPASEQNE (198 aa)) is disordered. Gly2 carries N-myristoyl glycine lipidation. Thr14 is modified (phosphothreonine). 4 positions are modified to phosphoserine: Ser22, Ser36, Ser41, and Ser48. Low complexity predominate over residues 53 to 62 (GTEEAAGATG). At Ser71 the chain carries Phosphoserine. The segment covering 76 to 85 (AKGEVPPKET) has biased composition (basic and acidic residues). A Phosphothreonine modification is found at Thr85. Over residues 86 to 98 (PKKKKKFSFKKPF) the composition is skewed to basic residues. An effector domain involved in lipid-binding and calmodulin-binding region spans residues 87-110 (KKKKKFSFKKPFKLSGLSFKRNRK). A phosphoserine; by PKC mark is found at Ser93, Ser101, and Ser104. A Phosphoserine modification is found at Ser119. Position 120 is a phosphoserine; by MAPK8 (Ser120). A Phosphoserine modification is found at Ser132. Phosphothreonine; by MAPK8 is present on Thr148. Phosphoserine is present on residues Ser151 and Ser162. The segment covering 156-167 (AKGAEASAAAKG) has biased composition (low complexity). Thr170 carries the phosphothreonine modification. A Phosphothreonine; by MAPK8 modification is found at Thr182.

This sequence belongs to the MARCKS family. In terms of assembly, binds to filamentous actin (F-actin), but not to monomeric G-actin, independently of its phosphorylation status. Interacts with calmodulin. In terms of processing, phosphorylated. Phosphorylation at Ser-120 and Thr-182 is non-redundantly catalyzed by MAPK8 in vivo. Phosphorylation at Thr-148 is preferentially catalyzed by MAPK8 in vivo, but this modification can also be catalyzed by other kinases in the absence of MAPK8. May be phosphorylated by protein kinase C, which disrupts the interaction with calmodulin.

It localises to the cytoplasm. It is found in the cytoskeleton. The protein resides in the cell membrane. Its function is as follows. Controls cell movement by regulating actin cytoskeleton homeostasis and filopodium and lamellipodium formation. When unphosphorylated, induces cell migration. When phosphorylated by MAPK8, induces actin bundles formation and stabilization, thereby reducing actin plasticity, hence restricting cell movement, including neuronal migration. May be involved in coupling the protein kinase C and calmodulin signal transduction systems. In Bos taurus (Bovine), this protein is MARCKS-related protein (MARCKSL1).